The following is a 620-amino-acid chain: UvrABC system protein C (620 aa).

A GIY-YIG domain is found at 13–92 (DKPGVYIMKN…IKKYSPRYNI (80 aa)). One can recognise a UVR domain in the interval 204–239 (TSIIKNLKLEMEKAAEELEFEKAAKIRDRILAIELI).

It belongs to the UvrC family. As to quaternary structure, interacts with UvrB in an incision complex.

It localises to the cytoplasm. The UvrABC repair system catalyzes the recognition and processing of DNA lesions. UvrC both incises the 5' and 3' sides of the lesion. The N-terminal half is responsible for the 3' incision and the C-terminal half is responsible for the 5' incision. The polypeptide is UvrABC system protein C (Clostridium perfringens (strain SM101 / Type A)).